A 573-amino-acid polypeptide reads, in one-letter code: SHC-transforming protein 2 (573 aa).

A PID domain is found at 125 to 307; sequence LGPGVSYIVR…TGLEESAWGD (183 aa). The SH2 domain occupies 478-569; the sequence is WYHGRMSRRA…ESELHLRGVV (92 aa).

As to quaternary structure, interacts with the Trk receptors in a phosphotyrosine-dependent manner and MEGF12. Once activated, binds to GRB2. In terms of processing, phosphorylated on tyrosine by the Trk receptors.

Functionally, signaling adapter that couples activated growth factor receptors to signaling pathway in neurons. Involved in the signal transduction pathways of neurotrophin-activated Trk receptors in cortical neurons. The sequence is that of SHC-transforming protein 2 (Shc2) from Rattus norvegicus (Rat).